The primary structure comprises 442 residues: MDQDGEKRVRAKQSDDEVDWLRDLPESLLCHILLNLPTKDVVKTSVLSSKWRNLWRLVPGLDLDSSDFTENNTFVSFIDRFMSFHSDLYLKKFKLRFFCNLNGDEVSENAHIARWINDVVKRKVHNLDLTWGAVEIPPILYLCNSLVSLKLCGVTLPNLELTSLPCVKVIVLEWVKFANDLALEMLISGCLVLESLTLCRRPNDNVKILRVSSQSLLRFSYNGSSYKGLHDDLVLEINAPKLKILKLFSHQLTTSFIRNTSSSIVEADINIGLGKKFDPKDLPKRNVICNFLAGISSVKNLFIAPCTLEVIYDYSRCEPLPLFCNLSYLSVDFYNNSWEILPIFLESCPNLKSLVVGSITSPKRRTSVLSGPRRLLSSLEYVEIESPLTGEVFEMKLVSYLLENSPILKKLTINLDDSSRKKAECELLTIPRRSTSCQVVVL.

The F-box domain maps to 18-64; that stretch reads VDWLRDLPESLLCHILLNLPTKDVVKTSVLSSKWRNLWRLVPGLDLD. Residues 363 to 415 enclose the FBD domain; it reads KRRTSVLSGPRRLLSSLEYVEIESPLTGEVFEMKLVSYLLENSPILKKLTINL.

This is FBD-associated F-box protein At1g66310 from Arabidopsis thaliana (Mouse-ear cress).